Reading from the N-terminus, the 302-residue chain is Sulfate adenylyltransferase subunit 2 (302 aa).

This sequence belongs to the PAPS reductase family. CysD subfamily. Heterodimer composed of CysD, the smaller subunit, and CysN.

It catalyses the reaction sulfate + ATP + H(+) = adenosine 5'-phosphosulfate + diphosphate. The protein operates within sulfur metabolism; hydrogen sulfide biosynthesis; sulfite from sulfate: step 1/3. Functionally, with CysN forms the ATP sulfurylase (ATPS) that catalyzes the adenylation of sulfate producing adenosine 5'-phosphosulfate (APS) and diphosphate, the first enzymatic step in sulfur assimilation pathway. APS synthesis involves the formation of a high-energy phosphoric-sulfuric acid anhydride bond driven by GTP hydrolysis by CysN coupled to ATP hydrolysis by CysD. This is Sulfate adenylyltransferase subunit 2 from Shigella dysenteriae serotype 1 (strain Sd197).